A 430-amino-acid chain; its full sequence is MLSISQLPSFSLTTAKSLRYPSSPSSSLSIFFSFFPKVSNFVRASSGIPNLVACSPTEIIIPRVNNAGLRIEEIVDAAKGKIRLDSWISSRINGVSRARVQSSIRLGLVTVNGRVVDKVSHNVKSGDEVNCTISELQPLKAEAEDIPLDIVYEDKHVLVVNKPAHMVVHPAPGNPTGTLVNGILHHCSLPCVDYSNSEEDDDSDEETFSDDEEMTTSPSSYAASVRPGIVHRLDKGTTGLLVVAKDEHSHAHLAEQFKLHTIERVYVSLTTGVPSPPQGRIEIPIGRDSSNRIRMAAIPGGVRGGRARHAASRYKVIETFAGGGSALVEWRLETGRTHQIRAHAKYMGVPLLGDEVYGGTKSMALSLLQKRVSRSDQEEIIELISRMDRPCLHAIVLGFTHPCTGEIVKFSCPPPSDLAEIVGLLRRSGL.

Residues 1–43 (MLSISQLPSFSLTTAKSLRYPSSPSSSLSIFFSFFPKVSNFVR) constitute a chloroplast transit peptide. The S4 RNA-binding domain occupies 82 to 155 (IRLDSWISSR…IPLDIVYEDK (74 aa)). Positions 195–222 (SNSEEDDDSDEETFSDDEEMTTSPSSYA) are disordered. Residues 196 to 214 (NSEEDDDSDEETFSDDEEM) are compositionally biased toward acidic residues. The active site involves aspartate 234.

Belongs to the pseudouridine synthase RluA family.

It is found in the plastid. Its subcellular location is the chloroplast. The catalysed reaction is a uridine in RNA = a pseudouridine in RNA. The chain is RNA pseudouridine synthase 2, chloroplastic from Arabidopsis thaliana (Mouse-ear cress).